We begin with the raw amino-acid sequence, 412 residues long: Putative competence-damage inducible protein (412 aa).

Belongs to the CinA family.

The sequence is that of Putative competence-damage inducible protein from Caldanaerobacter subterraneus subsp. tengcongensis (strain DSM 15242 / JCM 11007 / NBRC 100824 / MB4) (Thermoanaerobacter tengcongensis).